Consider the following 332-residue polypeptide: Melanocortin receptor 4 (332 aa).

Topologically, residues 1–43 are extracellular; sequence MNSTQPLGMHTSLHSWNRSAHGMPTNVSESLAKGYSDGGCYEQ. Asn2, Asn17, and Asn26 each carry an N-linked (GlcNAc...) asparagine glycan. 2 disulfide bridges follow: Cys40/Cys279 and Cys271/Cys277. A helical transmembrane segment spans residues 44–69; it reads LFVSPEVFVTLGVISLLENILVIVAI. At 70 to 81 the chain is on the cytoplasmic side; sequence AKNKNLHSPMYF. A helical transmembrane segment spans residues 82–106; the sequence is FICSLAVADMLVSVSNGSETIVITL. Ca(2+) is bound by residues Glu100, Asp122, and Asp126. The Extracellular portion of the chain corresponds to 107 to 123; the sequence is LNSTDTDAQSFTVDIDN. Residues 124–145 traverse the membrane as a helical segment; sequence VIDSVICSSLLASICSLLSIAV. Over 146–165 the chain is Cytoplasmic; that stretch reads DRYFTIFYALQYHNIMTVKR. Residues 166–186 form a helical membrane-spanning segment; sequence VAITISAIWAACTVSGVLFII. The Extracellular segment spans residues 187–191; the sequence is YSDSS. Residues 192 to 215 form a helical membrane-spanning segment; it reads AVIICLITVFFTMLALMASLYVHM. At 216–248 the chain is on the cytoplasmic side; sequence FLMARLHIKRIAVLPGSGTIRQGANMKGAITLT. A helical membrane pass occupies residues 249–271; sequence ILIGVFVVCWAPFFLHLIFYISC. At 272 to 280 the chain is on the extracellular side; that stretch reads PQNPYCVCF. A helical transmembrane segment spans residues 281–304; that stretch reads MSHFNLYLILIMCNSIIDPLIYAL. Over 305-332 the chain is Cytoplasmic; that stretch reads RSQELRKTFKEIICCSPLGGLCDLSSRY. Cys318 carries the S-palmitoyl cysteine lipid modification.

Belongs to the G-protein coupled receptor 1 family. Homodimer; disulfide-linked, also forms higher order oligomers. Interacts with GNAS. Interacts with ATRNL1. Interacts with MGRN1; this interaction competes with GNAS-binding and thus inhibits agonist-induced cAMP production. Interacts with MRAP and MRAP2; these associated factors increase ligand-sensitivity and generation of cAMP.

The protein localises to the cell membrane. In terms of biological role, hormone receptor that acts as a key component of the leptin-melanocortin pathway at the intersection of homeostatic maintenance of energetic state. Plays a role in regulating food intake: activation by a stimulating hormone such as anorexigenic alpha-melanocyte stimulating hormone (alpha-MSH) inhibits appetite, whereas binding to a natural antagonist like Agouti-related protein/AGRP promotes appetite. G-protein-coupled receptor that activates conventional Galphas signaling leading to induction of anorexogenic signaling in the hypothalamus to result in negative energy balance. Regulates the firing activity of neurons from the hypothalamus by alpha-MSH and AGRP independently of Galphas signaling by ligand-induced coupling of closure of inwardly rectifying potassium channel KCNJ13. In intestinal epithelial cells, plays a role in the inhibition of hepatic glucose production via nesfatin-1/NUCB2 leading to increased cyclic adenosine monophosphate (cAMP) levels and glucagon-like peptide 1 (GLP-1) secretion in the intestinal epithelium. This chain is Melanocortin receptor 4 (MC4R), found in Bos taurus (Bovine).